The following is a 245-amino-acid chain: MIIPALDLIDGTVVRLHQGDYGKQRDYGNDPLPRLQDYAAQGAEVLHLVDLTGAKDPAKRQIPLIKTLVAGVNVPVQVGGGVRSEEDVAALLEAGVARVVVGSTAVKSPEMVKGWFERFGADALVLALDVRIDEQGNKQVAVSGWQENSGVSLEQLVETYLPVGLKHVLCTDISRDGTLAGSNVSLYEEVCAKYPQVAFQSSGGIGDIDDVAALRGTGVRGVIVGRALLEGKFTVKEAIACWQNA.

Catalysis depends on aspartate 7, which acts as the Proton acceptor. Aspartate 129 serves as the catalytic Proton donor.

It belongs to the HisA/HisF family.

The protein localises to the cytoplasm. The catalysed reaction is 1-(5-phospho-beta-D-ribosyl)-5-[(5-phospho-beta-D-ribosylamino)methylideneamino]imidazole-4-carboxamide = 5-[(5-phospho-1-deoxy-D-ribulos-1-ylimino)methylamino]-1-(5-phospho-beta-D-ribosyl)imidazole-4-carboxamide. It participates in amino-acid biosynthesis; L-histidine biosynthesis; L-histidine from 5-phospho-alpha-D-ribose 1-diphosphate: step 4/9. The polypeptide is 1-(5-phosphoribosyl)-5-[(5-phosphoribosylamino)methylideneamino] imidazole-4-carboxamide isomerase (Escherichia fergusonii (strain ATCC 35469 / DSM 13698 / CCUG 18766 / IAM 14443 / JCM 21226 / LMG 7866 / NBRC 102419 / NCTC 12128 / CDC 0568-73)).